Here is a 65-residue protein sequence, read N- to C-terminus: Transcriptional regulatory protein SenS (65 aa).

The H-T-H motif DNA-binding region spans 11–31 (RFRKRKTYGNQILPLELLIEK).

To B.natto SenN.

Its function is as follows. Regulates the expression of extracellular-protein genes of Bacillus subtilis. This chain is Transcriptional regulatory protein SenS (senS), found in Bacillus subtilis (strain 168).